A 117-amino-acid chain; its full sequence is Small ribosomal subunit protein bS6 (117 aa).

Residues 96–117 (HDEGPSVQMQKRDEREGRRERR) are disordered.

It belongs to the bacterial ribosomal protein bS6 family.

Binds together with bS18 to 16S ribosomal RNA. This chain is Small ribosomal subunit protein bS6, found in Jannaschia sp. (strain CCS1).